The sequence spans 148 residues: Major microfilarial sheath protein (148 aa).

Positions 1-18 are cleaved as a signal peptide; it reads MCCKAILSFCILSSLGNA. Residues 19–43 constitute a propeptide, removed in mature form; that stretch reads LYFGSHRPQYLREVGQRQYPFEPQA. 5 repeats span residues 46 to 50, 54 to 58, 59 to 63, 64 to 68, and 71 to 75; these read MLPVP, MGPQP, MEPQP, and MGPQS. The repeat-rich region stretch occupies residues 46 to 75; sequence MLPVPQQPMGPQPMGPQPMEPQPLPMGPQS. Pro residues predominate over residues 52 to 73; that stretch reads QPMGPQPMGPQPMEPQPLPMGP. Residues 52–80 are disordered; that stretch reads QPMGPQPMGPQPMEPQPLPMGPQSPQMQV.

This sequence to B.pahangi filarial sheath protein. Post-translationally, O-glycosylated.

In Litomosoides carinii, this protein is Major microfilarial sheath protein (GP22).